The sequence spans 191 residues: Peptidyl-tRNA hydrolase (191 aa).

Tyr-17 contacts tRNA. Residue His-22 is the Proton acceptor of the active site. Positions 68, 70, and 116 each coordinate tRNA.

This sequence belongs to the PTH family. Monomer.

Its subcellular location is the cytoplasm. It catalyses the reaction an N-acyl-L-alpha-aminoacyl-tRNA + H2O = an N-acyl-L-amino acid + a tRNA + H(+). In terms of biological role, hydrolyzes ribosome-free peptidyl-tRNAs (with 1 or more amino acids incorporated), which drop off the ribosome during protein synthesis, or as a result of ribosome stalling. Functionally, catalyzes the release of premature peptidyl moieties from peptidyl-tRNA molecules trapped in stalled 50S ribosomal subunits, and thus maintains levels of free tRNAs and 50S ribosomes. The protein is Peptidyl-tRNA hydrolase of Mycolicibacterium smegmatis (strain ATCC 700084 / mc(2)155) (Mycobacterium smegmatis).